Reading from the N-terminus, the 331-residue chain is Putative peptidyl-prolyl cis-trans isomerase RF_0616 (331 aa).

Residues 28 to 50 (NPTTIEQTASNNSSTDENQTSIN) form a disordered region. One can recognise a PPIase FKBP-type domain in the interval 128–226 (GHVVTVFYQI…NNEVKIYDDE (99 aa)).

The catalysed reaction is [protein]-peptidylproline (omega=180) = [protein]-peptidylproline (omega=0). The polypeptide is Putative peptidyl-prolyl cis-trans isomerase RF_0616 (Rickettsia felis (strain ATCC VR-1525 / URRWXCal2) (Rickettsia azadi)).